Here is a 521-residue protein sequence, read N- to C-terminus: Protein NRT1/ PTR FAMILY 5.5 (521 aa).

12 consecutive transmembrane segments (helical) span residues 3–23, 35–55, 62–82, 96–116, 134–154, 165–185, 279–299, 310–327, 356–376, 394–414, 440–460, and 478–498; these read VLSWAFTVAWFTLWMLMLYLT, AIVNVFAGVSAIGHLGMQFLV, FWMLCLSTLAFSFGFGFLAIS, FYVALTVISVGIFGRSISLGV, LVSFVIGNVGNFVFLLLAAIA, FTIPSGCEVLAMLIFISGACS, VPLFATSLISGIVFSLGNTFF, FGSWNLPLPLLLLFSEAA, PYGIPVSIILSIFCCSIAAHV, VPMSVFWLLPQYILLGSITGI, VGVCGVGIMSNIALVSLVGSV, and YYWVITVFCMFNLLLYFIVTY.

It belongs to the major facilitator superfamily. Proton-dependent oligopeptide transporter (POT/PTR) (TC 2.A.17) family. Expressed in roots.

The protein resides in the membrane. The chain is Protein NRT1/ PTR FAMILY 5.5 (NPF5.5) from Arabidopsis thaliana (Mouse-ear cress).